A 213-amino-acid chain; its full sequence is Ribonuclease HII (213 aa).

Residues 1 to 206 (MICGVDEAGK…VSTLLAKKTQ (206 aa)) enclose the RNase H type-2 domain. Asp6, Glu7, and Asp101 together coordinate a divalent metal cation.

The protein belongs to the RNase HII family. Requires Mn(2+) as cofactor. The cofactor is Mg(2+).

It localises to the cytoplasm. It catalyses the reaction Endonucleolytic cleavage to 5'-phosphomonoester.. In terms of biological role, endonuclease that specifically degrades the RNA of RNA-DNA hybrids. The protein is Ribonuclease HII of Methanoregula boonei (strain DSM 21154 / JCM 14090 / 6A8).